The primary structure comprises 330 residues: MKKTFILQQQEISFVKNTFTQNLIEQLGIIEVQGPILSQVGNGMQDNLSGIEKAVQVNVKCIPNAVFEVVHSLAKWKRHTLARFNFKEDEGLFVHMKALRPDEDSLDPTHSVYVDQWDWEKVIPEGRRNFAYLKETVNSIYRAIRLTELAVEARFDIPSILPKQITFVHSEDLVKRYPDLSSKERENAICKEYGAVFLIGIGGKLSDGKPHDGRAPDYDDWTTESENGYKGLNGDILVWNDQLGKAFELSSMGIRVDESALRLQVGLTGDEDHLKMDWHQDLLNGKLPLTIGGGIGQSRLAMLLLRKKHIGEVQSSVWPKEMLEEFSNIL.

It belongs to the class-II aminoacyl-tRNA synthetase family. AsnA subfamily.

It localises to the cytoplasm. It catalyses the reaction L-aspartate + NH4(+) + ATP = L-asparagine + AMP + diphosphate + H(+). The protein operates within amino-acid biosynthesis; L-asparagine biosynthesis; L-asparagine from L-aspartate (ammonia route): step 1/1. The sequence is that of Aspartate--ammonia ligase from Haemophilus influenzae (strain ATCC 51907 / DSM 11121 / KW20 / Rd).